The following is a 230-amino-acid chain: 2,3-bisphosphoglycerate-dependent phosphoglycerate mutase (230 aa).

Substrate contacts are provided by residues 8–15 (RHGESEWN), 21–22 (TG), R60, 87–90 (ERHY), K98, 114–115 (RR), and 183–184 (GN). The active-site Tele-phosphohistidine intermediate is the H9. The active-site Proton donor/acceptor is the E87.

The protein belongs to the phosphoglycerate mutase family. BPG-dependent PGAM subfamily.

It carries out the reaction (2R)-2-phosphoglycerate = (2R)-3-phosphoglycerate. It participates in carbohydrate degradation; glycolysis; pyruvate from D-glyceraldehyde 3-phosphate: step 3/5. Its function is as follows. Catalyzes the interconversion of 2-phosphoglycerate and 3-phosphoglycerate. The sequence is that of 2,3-bisphosphoglycerate-dependent phosphoglycerate mutase from Streptococcus gordonii (strain Challis / ATCC 35105 / BCRC 15272 / CH1 / DL1 / V288).